The sequence spans 122 residues: Large ribosomal subunit protein bL12 (122 aa).

The protein belongs to the bacterial ribosomal protein bL12 family. In terms of assembly, homodimer. Part of the ribosomal stalk of the 50S ribosomal subunit. Forms a multimeric L10(L12)X complex, where L10 forms an elongated spine to which 2 to 4 L12 dimers bind in a sequential fashion. Binds GTP-bound translation factors.

Forms part of the ribosomal stalk which helps the ribosome interact with GTP-bound translation factors. Is thus essential for accurate translation. The polypeptide is Large ribosomal subunit protein bL12 (Xylella fastidiosa (strain M23)).